A 105-amino-acid chain; its full sequence is Flagellar transcriptional regulator FlhD (105 aa).

The protein belongs to the FlhD family. Homodimer; disulfide-linked. Forms a heterohexamer composed of two FlhC and four FlhD subunits. Each FlhC binds a FlhD dimer, forming a heterotrimer, and a hexamer assembles by dimerization of two heterotrimers.

The protein localises to the cytoplasm. In terms of biological role, functions in complex with FlhC as a master transcriptional regulator that regulates transcription of several flagellar and non-flagellar operons by binding to their promoter region. Activates expression of class 2 flagellar genes, including fliA, which is a flagellum-specific sigma factor that turns on the class 3 genes. Also regulates genes whose products function in a variety of physiological pathways. This Cupriavidus necator (strain ATCC 17699 / DSM 428 / KCTC 22496 / NCIMB 10442 / H16 / Stanier 337) (Ralstonia eutropha) protein is Flagellar transcriptional regulator FlhD.